Here is a 223-residue protein sequence, read N- to C-terminus: MELYLDTASLEEIREIAAWGVLSGVTTNPTLVAKAFAAKGEALTEEAFAAHLRAICETVGGPVSAEVTALEAEAMVAEGRRLAAIHPNIVVKLPTTEEGLKACKRLSAEGIKVNMTLIFSANQALLAARAGASYVSPFLGRVDDISWDGGELLREIVEMIQVQDLPVKVIAASIRHPRHVTEAALLGADIATMPHAVFKQLLKHPLTDIGLKRFLEDWEKVKP.

The active-site Schiff-base intermediate with substrate is the K92.

It belongs to the transaldolase family. Type 3B subfamily.

The protein localises to the cytoplasm. It carries out the reaction D-sedoheptulose 7-phosphate + D-glyceraldehyde 3-phosphate = D-erythrose 4-phosphate + beta-D-fructose 6-phosphate. It participates in carbohydrate degradation; pentose phosphate pathway; D-glyceraldehyde 3-phosphate and beta-D-fructose 6-phosphate from D-ribose 5-phosphate and D-xylulose 5-phosphate (non-oxidative stage): step 2/3. In terms of biological role, transaldolase is important for the balance of metabolites in the pentose-phosphate pathway. The chain is Probable transaldolase from Thermus thermophilus (strain ATCC 27634 / DSM 579 / HB8).